A 141-amino-acid polypeptide reads, in one-letter code: Hemoglobin subunit alpha (141 aa).

In terms of domain architecture, Globin spans 1 to 141 (VLSPADKTNL…VSTVLTSKYR (141 aa)). Position 3 is a phosphoserine (S3). Position 7 is an N6-succinyllysine (K7). Position 8 is a phosphothreonine (T8). Position 11 is an N6-succinyllysine (K11). At K16 the chain carries N6-acetyllysine; alternate. K16 is subject to N6-succinyllysine; alternate. Y24 is modified (phosphotyrosine). K40 is modified (N6-succinyllysine). At S49 the chain carries Phosphoserine. Residue H58 coordinates O2. H87 contributes to the heme b binding site. The residue at position 102 (S102) is a Phosphoserine. A Phosphothreonine modification is found at T108. S124 carries the post-translational modification Phosphoserine. 2 positions are modified to phosphothreonine: T134 and T137. Residue S138 is modified to Phosphoserine.

The protein belongs to the globin family. Heterotetramer of two alpha chains and two beta chains. In terms of tissue distribution, red blood cells.

Involved in oxygen transport from the lung to the various peripheral tissues. The chain is Hemoglobin subunit alpha from Tamias striatus (Eastern chipmunk).